A 284-amino-acid polypeptide reads, in one-letter code: Rhomboid-type serine protease 2 (284 aa).

The next 6 helical transmembrane spans lie at 17 to 37 (PPALTTGLIVFTFMLCVIKSV), 66 to 86 (FHVNFFHWICNIFTLATPLAV), 98 to 118 (VTLNLLTVIAALQYCIVGLIF), 124 to 141 (VIGLSGIAFSLMSYMAYH), 160 to 180 (IKLYTLYVPFVVAIVFMILFP), and 182 to 202 (SSLPGHLFGITTGYLLSYGYI). The active-site Nucleophile is the Ser-128. Residue His-187 is part of the active site.

It belongs to the peptidase S54 family.

The protein localises to the golgi apparatus membrane. The protein resides in the golgi apparatus. It localises to the cis-Golgi network membrane. It carries out the reaction Cleaves type-1 transmembrane domains using a catalytic dyad composed of serine and histidine that are contributed by different transmembrane domains.. Its function is as follows. Probable rhomboid-type serine protease that catalyzes intramembrane proteolysis. In Candida albicans (strain SC5314 / ATCC MYA-2876) (Yeast), this protein is Rhomboid-type serine protease 2 (RBD2).